We begin with the raw amino-acid sequence, 338 residues long: D-erythrose-4-phosphate dehydrogenase (338 aa).

11 to 12 (RI) provides a ligand contact to NAD(+). Substrate-binding positions include 153 to 155 (SCT), Arg-199, 212 to 213 (TK), and Arg-235. Cys-154 serves as the catalytic Nucleophile. Position 317 (Asn-317) interacts with NAD(+).

Belongs to the glyceraldehyde-3-phosphate dehydrogenase family. Epd subfamily. In terms of assembly, homotetramer.

It localises to the cytoplasm. The catalysed reaction is D-erythrose 4-phosphate + NAD(+) + H2O = 4-phospho-D-erythronate + NADH + 2 H(+). Its pathway is cofactor biosynthesis; pyridoxine 5'-phosphate biosynthesis; pyridoxine 5'-phosphate from D-erythrose 4-phosphate: step 1/5. Its function is as follows. Catalyzes the NAD-dependent conversion of D-erythrose 4-phosphate to 4-phosphoerythronate. The polypeptide is D-erythrose-4-phosphate dehydrogenase (Shewanella loihica (strain ATCC BAA-1088 / PV-4)).